The chain runs to 346 residues: Holliday junction branch migration complex subunit RuvB (346 aa).

The segment at 1–182 (MSEAARLIAP…FGIPVRLNFY (182 aa)) is large ATPase domain (RuvB-L). ATP contacts are provided by residues Arg22, Gly63, Lys66, Thr67, Thr68, 129–131 (EDF), Arg172, Tyr182, and Arg219. Thr67 is a binding site for Mg(2+). A small ATPAse domain (RuvB-S) region spans residues 183–253 (TVEELELIVR…IADEALTRLL (71 aa)). The interval 256–346 (SMGLDQLDRR…SQFRLTLEDD (91 aa)) is head domain (RuvB-H). Residues Arg292, Arg311, and Arg316 each contribute to the DNA site.

Belongs to the RuvB family. In terms of assembly, homohexamer. Forms an RuvA(8)-RuvB(12)-Holliday junction (HJ) complex. HJ DNA is sandwiched between 2 RuvA tetramers; dsDNA enters through RuvA and exits via RuvB. An RuvB hexamer assembles on each DNA strand where it exits the tetramer. Each RuvB hexamer is contacted by two RuvA subunits (via domain III) on 2 adjacent RuvB subunits; this complex drives branch migration. In the full resolvosome a probable DNA-RuvA(4)-RuvB(12)-RuvC(2) complex forms which resolves the HJ.

Its subcellular location is the cytoplasm. The enzyme catalyses ATP + H2O = ADP + phosphate + H(+). The RuvA-RuvB-RuvC complex processes Holliday junction (HJ) DNA during genetic recombination and DNA repair, while the RuvA-RuvB complex plays an important role in the rescue of blocked DNA replication forks via replication fork reversal (RFR). RuvA specifically binds to HJ cruciform DNA, conferring on it an open structure. The RuvB hexamer acts as an ATP-dependent pump, pulling dsDNA into and through the RuvAB complex. RuvB forms 2 homohexamers on either side of HJ DNA bound by 1 or 2 RuvA tetramers; 4 subunits per hexamer contact DNA at a time. Coordinated motions by a converter formed by DNA-disengaged RuvB subunits stimulates ATP hydrolysis and nucleotide exchange. Immobilization of the converter enables RuvB to convert the ATP-contained energy into a lever motion, pulling 2 nucleotides of DNA out of the RuvA tetramer per ATP hydrolyzed, thus driving DNA branch migration. The RuvB motors rotate together with the DNA substrate, which together with the progressing nucleotide cycle form the mechanistic basis for DNA recombination by continuous HJ branch migration. Branch migration allows RuvC to scan DNA until it finds its consensus sequence, where it cleaves and resolves cruciform DNA. The sequence is that of Holliday junction branch migration complex subunit RuvB from Rhizobium meliloti (strain 1021) (Ensifer meliloti).